Here is a 364-residue protein sequence, read N- to C-terminus: UDP-N-acetylglucosamine--N-acetylmuramyl-(pentapeptide) pyrophosphoryl-undecaprenol N-acetylglucosamine transferase (364 aa).

UDP-N-acetyl-alpha-D-glucosamine-binding positions include 10–12, Asn124, Arg165, Ser193, Ile248, and Gln293; that span reads TGG.

Belongs to the glycosyltransferase 28 family. MurG subfamily.

The protein resides in the cell inner membrane. The enzyme catalyses di-trans,octa-cis-undecaprenyl diphospho-N-acetyl-alpha-D-muramoyl-L-alanyl-D-glutamyl-meso-2,6-diaminopimeloyl-D-alanyl-D-alanine + UDP-N-acetyl-alpha-D-glucosamine = di-trans,octa-cis-undecaprenyl diphospho-[N-acetyl-alpha-D-glucosaminyl-(1-&gt;4)]-N-acetyl-alpha-D-muramoyl-L-alanyl-D-glutamyl-meso-2,6-diaminopimeloyl-D-alanyl-D-alanine + UDP + H(+). The protein operates within cell wall biogenesis; peptidoglycan biosynthesis. Cell wall formation. Catalyzes the transfer of a GlcNAc subunit on undecaprenyl-pyrophosphoryl-MurNAc-pentapeptide (lipid intermediate I) to form undecaprenyl-pyrophosphoryl-MurNAc-(pentapeptide)GlcNAc (lipid intermediate II). The polypeptide is UDP-N-acetylglucosamine--N-acetylmuramyl-(pentapeptide) pyrophosphoryl-undecaprenol N-acetylglucosamine transferase (Geobacter metallireducens (strain ATCC 53774 / DSM 7210 / GS-15)).